Consider the following 240-residue polypeptide: UDP-2,3-diacylglucosamine hydrolase (240 aa).

Positions 7, 9, 40, 78, and 113 each coordinate Mn(2+). Asn-78–Arg-79 contributes to the substrate binding site. Residues Asp-121, Ser-159, Lys-166, and His-194 each coordinate substrate. 2 residues coordinate Mn(2+): His-194 and His-196.

The protein belongs to the LpxH family. Requires Mn(2+) as cofactor.

Its subcellular location is the cell inner membrane. It catalyses the reaction UDP-2-N,3-O-bis[(3R)-3-hydroxytetradecanoyl]-alpha-D-glucosamine + H2O = 2-N,3-O-bis[(3R)-3-hydroxytetradecanoyl]-alpha-D-glucosaminyl 1-phosphate + UMP + 2 H(+). It participates in glycolipid biosynthesis; lipid IV(A) biosynthesis; lipid IV(A) from (3R)-3-hydroxytetradecanoyl-[acyl-carrier-protein] and UDP-N-acetyl-alpha-D-glucosamine: step 4/6. Hydrolyzes the pyrophosphate bond of UDP-2,3-diacylglucosamine to yield 2,3-diacylglucosamine 1-phosphate (lipid X) and UMP by catalyzing the attack of water at the alpha-P atom. Involved in the biosynthesis of lipid A, a phosphorylated glycolipid that anchors the lipopolysaccharide to the outer membrane of the cell. The sequence is that of UDP-2,3-diacylglucosamine hydrolase from Pseudomonas putida (strain ATCC 700007 / DSM 6899 / JCM 31910 / BCRC 17059 / LMG 24140 / F1).